The primary structure comprises 264 residues: TLC domain-containing protein 2 (264 aa).

6 consecutive transmembrane segments (helical) span residues proline 3 to leucine 23, leucine 42 to leucine 62, tryptophan 77 to leucine 97, valine 114 to valine 134, serine 169 to phenylalanine 189, and leucine 199 to isoleucine 219. A TLC domain is found at arginine 34–leucine 227. Residues arginine 230–aspartate 264 form a disordered region. The segment covering glycine 237–asparagine 250 has biased composition (basic and acidic residues). The segment covering proline 252–aspartate 264 has biased composition (polar residues).

The protein belongs to the TLCD family.

The protein resides in the cell membrane. Its function is as follows. Regulates the composition and fluidity of the plasma membrane. Inhibits the incorporation of membrane-fluidizing phospholipids containing omega-3 long-chain polyunsaturated fatty acids (LCPUFA) and thereby promotes membrane rigidity. Does not appear to have any effect on LCPUFA synthesis. This Homo sapiens (Human) protein is TLC domain-containing protein 2 (TLCD2).